A 434-amino-acid polypeptide reads, in one-letter code: Putative nuclease OPG089 (434 aa).

Belongs to the XPG/RAD2 endonuclease family. FEN1 subfamily. It depends on Mg(2+) as a cofactor.

Its subcellular location is the virion. Functionally, putative nuclease that seems to be required for double-strand break repair, homologous recombination, and production of full-length viral genomic DNA. The chain is Putative nuclease OPG089 (OPG089) from Monkeypox virus.